The sequence spans 134 residues: Small ribosomal subunit protein uS11 (134 aa).

Belongs to the universal ribosomal protein uS11 family. In terms of assembly, part of the 30S ribosomal subunit. Interacts with proteins S7 and S18. Binds to IF-3.

In terms of biological role, located on the platform of the 30S subunit, it bridges several disparate RNA helices of the 16S rRNA. Forms part of the Shine-Dalgarno cleft in the 70S ribosome. The chain is Small ribosomal subunit protein uS11 from Herminiimonas arsenicoxydans.